A 1358-amino-acid chain; its full sequence is Tenascin-R (1358 aa).

An N-terminal signal peptide occupies residues 1–31 (MGADGETVVLKNMLIGINLILLGSMIKPSEC). T36 and T37 each carry an O-linked (GalNAc...) threonine glycan. Residue N55 is glycosylated (N-linked (GlcNAc...) asparagine). Residues 127–157 (CASSAQVLQELLSRIEMLEREVSVLRDQCNA) are a coiled coil. A glycan (O-linked (Xyl...) (chondroitin sulfate) serine) is linked at S176. N180 and N198 each carry an N-linked (GlcNAc...) asparagine glycan. EGF-like domains are found at residues 188–199 (CICNEGWFGKNC), 219–230 (CICDSEYSGDDC), and 250–261 (CVCEEPYTGEDC). O-linked (Xyl...) (chondroitin sulfate) serine glycosylation occurs at S271. Residue N278 is glycosylated (N-linked (GlcNAc...) asparagine). The EGF-like 4 domain maps to 281-292 (CLCEEGYVGEDC). Intrachain disulfides connect C292–C301, C297–C312, and C314–C323. S302 carries an O-linked (Xyl...) (chondroitin sulfate) serine glycan. In terms of domain architecture, EGF-like 5 spans 312-323 (CVCEEGYQGPDC). 9 consecutive Fibronectin type-III domains span residues 328-420 (PPED…TPQG), 421-505 (LQFK…TVID), 506-595 (GPTQ…TEID), 596-687 (APKN…TELD), 688-777 (SPRD…FRPI), 778-865 (SHLH…TGID), 866-955 (PPKD…AMDN), 956-1042 (PVDL…TLLD), and 1043-1130 (PPAN…TGGR). N-linked (GlcNAc...) asparagine glycosylation is found at N392, N470, and N581. Phosphoserine is present on S724. Residues N791, N874, N1036, N1046, and N1261 are each glycosylated (N-linked (GlcNAc...) asparagine). The 216-residue stretch at 1129 to 1344 (GRVFPHPQDC…FVEMKMRPYN (216 aa)) folds into the Fibrinogen C-terminal domain.

It belongs to the tenascin family. As to quaternary structure, forms oligomers. Interacts with CNTN1, TNC, and FN1. Interacts with BCAN and ACAN in a calcium-dependent manner. Interacts with SCN2B, PTPRZ1, and CSPG3. Post-translationally, contains N-linked oligosaccharides, O-linked sialylated structures and O-linked chondroitin sulfate glycosaminoglycans. Contains N-linked oligosaccharides with a sulfated carbohydrate structure. O-glycosylated on Thr-36 or Thr-37 with a core 1 or possibly core 8 glycan. As to expression, brain specific.

It is found in the secreted. It localises to the extracellular space. Its subcellular location is the extracellular matrix. Its function is as follows. Neural extracellular matrix (ECM) protein involved in interactions with different cells and matrix components. These interactions can influence cellular behavior by either evoking a stable adhesion and differentiation, or repulsion and inhibition of neurite growth. Binding to cell surface gangliosides inhibits RGD-dependent integrin-mediated cell adhesion and results in an inhibition of PTK2/FAK1 (FAK) phosphorylation and cell detachment. Binding to membrane surface sulfatides results in a oligodendrocyte adhesion and differentiation. Interaction with CNTN1 induces a repulsion of neurons and an inhibition of neurite outgrowth. Interacts with SCN2B may play a crucial role in clustering and regulation of activity of sodium channels at nodes of Ranvier. TNR-linked chondroitin sulfate glycosaminoglycans are involved in the interaction with FN1 and mediate inhibition of cell adhesion and neurite outgrowth. The highly regulated addition of sulfated carbohydrate structure may modulate the adhesive properties of TNR over the course of development and during synapse maintenance. This Homo sapiens (Human) protein is Tenascin-R (TNR).